The following is a 210-amino-acid chain: Large ribosomal subunit protein bL25 (210 aa).

The segment at 186–210 (ISSASTEKEAESNQESTSTTPSSES) is disordered. Low complexity predominate over residues 198 to 210 (NQESTSTTPSSES).

It belongs to the bacterial ribosomal protein bL25 family. CTC subfamily. Part of the 50S ribosomal subunit; part of the 5S rRNA/L5/L18/L25 subcomplex. Contacts the 5S rRNA. Binds to the 5S rRNA independently of L5 and L18.

Its function is as follows. This is one of the proteins that binds to the 5S RNA in the ribosome where it forms part of the central protuberance. In Ehrlichia chaffeensis (strain ATCC CRL-10679 / Arkansas), this protein is Large ribosomal subunit protein bL25.